A 149-amino-acid chain; its full sequence is Large ribosomal subunit protein bL9 (149 aa).

This sequence belongs to the bacterial ribosomal protein bL9 family.

Binds to the 23S rRNA. The protein is Large ribosomal subunit protein bL9 of Campylobacter curvus (strain 525.92).